Here is a 308-residue protein sequence, read N- to C-terminus: Ribosomal RNA small subunit methyltransferase H (308 aa).

S-adenosyl-L-methionine is bound by residues 32–34 (GGH), Asp52, Phe78, Asp100, and Gln107.

It belongs to the methyltransferase superfamily. RsmH family.

It localises to the cytoplasm. The catalysed reaction is cytidine(1402) in 16S rRNA + S-adenosyl-L-methionine = N(4)-methylcytidine(1402) in 16S rRNA + S-adenosyl-L-homocysteine + H(+). In terms of biological role, specifically methylates the N4 position of cytidine in position 1402 (C1402) of 16S rRNA. The chain is Ribosomal RNA small subunit methyltransferase H from Legionella pneumophila (strain Paris).